Here is a 141-residue protein sequence, read N- to C-terminus: Extracellular globin-1 (141 aa).

The Globin domain maps to 1–141 (DCNTLKRFKV…YAVIAAGIKP (141 aa)). C2 and C131 are disulfide-bonded. A heme b-binding site is contributed by H94.

It belongs to the globin family. The giant hemoglobins of worms are formed of a monomeric subunit and a disulfide-bonded trimer. This subunit is monomeric.

It localises to the secreted. The polypeptide is Extracellular globin-1 (Metaphire sieboldi (Earthworm)).